A 28-amino-acid polypeptide reads, in one-letter code: leu operon leader peptide (28 aa).

Its function is as follows. Involved in control of the biosynthesis of leucine. The protein is leu operon leader peptide (leuL) of Shigella flexneri.